The sequence spans 325 residues: dITP/XTP pyrophosphatase (325 aa).

A unknown region spans residues 1–128; sequence MKEKIYEYKD…KKVSELGDTI (128 aa). The tract at residues 129-324 is NTP pyrophosphatase; the sequence is LIATRNEGKT…MEVFPAWQNA (196 aa). Residue 132–137 participates in substrate binding; that stretch reads TRNEGK. Mg(2+) contacts are provided by Glu165 and Asp194. The active-site Proton acceptor is the Asp194. Substrate-binding positions include Ser195, 278-281, Lys301, and 306-307; these read FGYD and HR.

It belongs to the HAM1 NTPase family. As to quaternary structure, homodimer. It depends on Mg(2+) as a cofactor.

It carries out the reaction XTP + H2O = XMP + diphosphate + H(+). The catalysed reaction is dITP + H2O = dIMP + diphosphate + H(+). The enzyme catalyses ITP + H2O = IMP + diphosphate + H(+). Pyrophosphatase that catalyzes the hydrolysis of nucleoside triphosphates to their monophosphate derivatives, with a high preference for the non-canonical purine nucleotides XTP (xanthosine triphosphate), dITP (deoxyinosine triphosphate) and ITP. Seems to function as a house-cleaning enzyme that removes non-canonical purine nucleotides from the nucleotide pool, thus preventing their incorporation into DNA/RNA and avoiding chromosomal lesions. The sequence is that of dITP/XTP pyrophosphatase from Streptococcus mutans serotype c (strain ATCC 700610 / UA159).